The primary structure comprises 492 residues: UDP-N-acetylmuramoyl-L-alanyl-D-glutamate--2,6-diaminopimelate ligase (492 aa).

S30 is a UDP-N-acetyl-alpha-D-muramoyl-L-alanyl-D-glutamate binding site. An ATP-binding site is contributed by 114-120 (GTNGKTS). UDP-N-acetyl-alpha-D-muramoyl-L-alanyl-D-glutamate contacts are provided by residues 156–157 (TT), S183, Q189, and R191. Residue K223 is modified to N6-carboxylysine. Meso-2,6-diaminopimelate-binding positions include R389, 413 to 416 (DNPR), G462, and E466. The Meso-diaminopimelate recognition motif signature appears at 413–416 (DNPR).

It belongs to the MurCDEF family. MurE subfamily. The cofactor is Mg(2+). In terms of processing, carboxylation is probably crucial for Mg(2+) binding and, consequently, for the gamma-phosphate positioning of ATP.

Its subcellular location is the cytoplasm. It catalyses the reaction UDP-N-acetyl-alpha-D-muramoyl-L-alanyl-D-glutamate + meso-2,6-diaminopimelate + ATP = UDP-N-acetyl-alpha-D-muramoyl-L-alanyl-gamma-D-glutamyl-meso-2,6-diaminopimelate + ADP + phosphate + H(+). Its pathway is cell wall biogenesis; peptidoglycan biosynthesis. Catalyzes the addition of meso-diaminopimelic acid to the nucleotide precursor UDP-N-acetylmuramoyl-L-alanyl-D-glutamate (UMAG) in the biosynthesis of bacterial cell-wall peptidoglycan. This Neisseria meningitidis serogroup B (strain ATCC BAA-335 / MC58) protein is UDP-N-acetylmuramoyl-L-alanyl-D-glutamate--2,6-diaminopimelate ligase.